A 254-amino-acid polypeptide reads, in one-letter code: Nickel import ATP-binding protein NikD (254 aa).

Residues 2–241 (PQQIELRNIA…PKHTVTRSLV (240 aa)) enclose the ABC transporter domain. 36–43 (GGSGSGKS) is a binding site for ATP.

It belongs to the ABC transporter superfamily. Nickel importer (TC 3.A.1.5.3) family. In terms of assembly, the complex is composed of two ATP-binding proteins (NikD and NikE), two transmembrane proteins (NikB and NikC) and a solute-binding protein (NikA).

The protein resides in the cell inner membrane. The catalysed reaction is Ni(2+)(out) + ATP + H2O = Ni(2+)(in) + ADP + phosphate + H(+). Its function is as follows. Part of the ABC transporter complex NikABCDE involved in nickel import. Responsible for energy coupling to the transport system. The polypeptide is Nickel import ATP-binding protein NikD (Shigella flexneri serotype 5b (strain 8401)).